We begin with the raw amino-acid sequence, 297 residues long: Magnetosome protein MamB (297 aa).

Topologically, residues 1–12 are cytoplasmic; it reads MKFENCRDCREE. A transmembrane domain (TMD) region spans residues 1-214; the sequence is MKFENCRDCR…GLMDSSVDTE (214 aa). The chain crosses the membrane as a helical span at residues 13-33; the sequence is VVWWAFTADICMTLFKGILGL. Over 34–83 the chain is Lumenal; it reads MSGSVALVADSLHSGADVVASGVTQLSLKISNKPADERYPFGYGNIQYIS. The helical transmembrane segment at 84-104 threads the bilayer; the sequence is SAIVGSLLLIGASFLMYGSVV. Topologically, residues 105 to 112 are cytoplasmic; it reads KLISGTYE. The chain crosses the membrane as a helical span at residues 113 to 133; the sequence is APSIFAALGASVTVIVNELMY. Over 134 to 164 the chain is Lumenal; that stretch reads RYQICVGNENNSPAIIANAWDNRSDAISSAA. Residues 165-185 traverse the membrane as a helical segment; that stretch reads VMVGVIASVIGFPIADTIAAI. The Cytoplasmic portion of the chain corresponds to 186 to 297; the sequence is GVSALVGHIG…PAPAAVTVRV (112 aa). A C-terminal domain (CTD) region spans residues 215–297; the sequence is LLQTAWQIAT…PAPAAVTVRV (83 aa).

This sequence belongs to the cation diffusion facilitator (CDF) transporter (TC 2.A.4) family. As to quaternary structure, forms homodimers via its C-terminal domain, may form higher order multimers that are sensitive to reducing agent. Probably interacts with MamE. Interacts with MamM via their C-terminal domains.

It is found in the cell inner membrane. Its subcellular location is the magnetosome membrane. Functionally, plays a dual, essential role in magnetosome formation; required for magnetosome vesicle formation as well as biomineralization. Requires heterodimerization with MamM for stability. Probably binds and transports iron. One of 7 genes (mamLQBIEMO) able to induce magnetosome membrane biogenesis; coexpression of mamLQRBIEMO in a deletion of the 17 gene mamAB operon restores magnetosome vesicle formation but not magnetite biosynthesis. The polypeptide is Magnetosome protein MamB (Magnetospirillum gryphiswaldense (strain DSM 6361 / JCM 21280 / NBRC 15271 / MSR-1)).